The following is a 150-amino-acid chain: MLGAALRRCAVAATTWAGPRGLLHSARTPGPAAAIQSVRCYSHGSYETDEEFDARWVTYFNKPDIDAWELRKGINTLATYDLVPEPKIIDAALRACRRLNDFASTVRILEAVKDKAGPHKEIYPYVIQELRPTLNELGISTPEELGLDKV.

The N-terminal 41 residues, 1–41 (MLGAALRRCAVAATTWAGPRGLLHSARTPGPAAAIQSVRCY), are a transit peptide targeting the mitochondrion. Residues 2 to 17 (LGAALRRCAVAATTWA) carry the SIFI-degron motif. Lysine 87 and lysine 113 each carry N6-acetyllysine. Threonine 141 carries the phosphothreonine modification.

This sequence belongs to the cytochrome c oxidase subunit 5A family. As to quaternary structure, component of the cytochrome c oxidase (complex IV, CIV), a multisubunit enzyme composed of 14 subunits. The complex is composed of a catalytic core of 3 subunits MT-CO1, MT-CO2 and MT-CO3, encoded in the mitochondrial DNA, and 11 supernumerary subunits COX4I, COX5A, COX5B, COX6A, COX6B, COX6C, COX7A, COX7B, COX7C, COX8 and NDUFA4, which are encoded in the nuclear genome. The complex exists as a monomer or a dimer and forms supercomplexes (SCs) in the inner mitochondrial membrane with NADH-ubiquinone oxidoreductase (complex I, CI) and ubiquinol-cytochrome c oxidoreductase (cytochrome b-c1 complex, complex III, CIII), resulting in different assemblies (supercomplex SCI(1)III(2)IV(1) and megacomplex MCI(2)III(2)IV(2)). Interacts with AFG1L. Interacts with RAB5IF. In response to mitochondrial stress, the precursor protein is ubiquitinated by the SIFI complex in the cytoplasm before mitochondrial import, leading to its degradation. Within the SIFI complex, UBR4 initiates ubiquitin chain that are further elongated or branched by KCMF1.

The protein resides in the mitochondrion inner membrane. It functions in the pathway energy metabolism; oxidative phosphorylation. Component of the cytochrome c oxidase, the last enzyme in the mitochondrial electron transport chain which drives oxidative phosphorylation. The respiratory chain contains 3 multisubunit complexes succinate dehydrogenase (complex II, CII), ubiquinol-cytochrome c oxidoreductase (cytochrome b-c1 complex, complex III, CIII) and cytochrome c oxidase (complex IV, CIV), that cooperate to transfer electrons derived from NADH and succinate to molecular oxygen, creating an electrochemical gradient over the inner membrane that drives transmembrane transport and the ATP synthase. Cytochrome c oxidase is the component of the respiratory chain that catalyzes the reduction of oxygen to water. Electrons originating from reduced cytochrome c in the intermembrane space (IMS) are transferred via the dinuclear copper A center (CU(A)) of subunit 2 and heme A of subunit 1 to the active site in subunit 1, a binuclear center (BNC) formed by heme A3 and copper B (CU(B)). The BNC reduces molecular oxygen to 2 water molecules using 4 electrons from cytochrome c in the IMS and 4 protons from the mitochondrial matrix. This chain is Cytochrome c oxidase subunit 5A, mitochondrial (COX5A), found in Papio anubis (Olive baboon).